We begin with the raw amino-acid sequence, 3198 residues long: Helicase domino (3198 aa).

Over residues 1–12 the composition is skewed to gly residues; sequence MNEGNSAGGGHE. Disordered regions lie at residues 1 to 27, 93 to 112, and 119 to 148; these read MNEGNSAGGGHEGLSPAPPAVPDRVTP, LPQQQQQTAEATAAAAAPAH, and SSTIEASVLPPQAKRQRLDDNEDRTSAASI. Basic and acidic residues predominate over residues 134 to 143; that stretch reads QRLDDNEDRT. A coiled-coil region spans residues 187–212; that stretch reads KKRILQQKLQILRNLKERHLENVSEY. Disordered stretches follow at residues 256–350 and 391–474; these read TSAA…SATS and GGTP…TPNS. Composition is skewed to polar residues over residues 264–281 and 297–329; these read QNQKYTTQQTDSVESSLV and NISNSTVKTNTQSQVPSKIGSFTESTPAATESN. Over residues 330–350 the composition is skewed to low complexity; the sequence is SSTTVPGTATSGAATSTSATS. The span at 391–404 shows a compositional bias: polar residues; the sequence is GGTPLLPCNTSAGS. Low complexity predominate over residues 452–464; it reads PGTPTSGSLLSPA. The HSA domain occupies 507 to 579; that stretch reads LPKLQEPSRP…QELQLKRVAS (73 aa). The tract at residues 635–848 is disordered; the sequence is NKSVADTPSL…DMEEQDEQED (214 aa). The segment covering 638–650 has biased composition (polar residues); sequence VADTPSLNSSRLT. Positions 652-664 are enriched in basic and acidic residues; the sequence is PKRESDDDFRPES. Phosphoserine occurs at positions 656, 664, and 666. Residues 666–696 are a coiled coil; that stretch reads SEDDEETIAKAEEDAADVKEEVTALAKESEM. Composition is skewed to basic and acidic residues over residues 672 to 695 and 711 to 721; these read TIAKAEEDAADVKEEVTALAKESE and ENRDKLMKEEQ. The residue at position 729 (T729) is a Phosphothreonine. S733, S736, and S744 each carry phosphoserine. Positions 741 to 784 form a coiled coil; sequence KEASDDDENTISKQEEAEQEIDHKKEIDELEADNDLSVEQLLAK. The span at 753 to 767 shows a compositional bias: basic and acidic residues; sequence KQEEAEQEIDHKKEI. Positions 805-831 are enriched in acidic residues; the sequence is LDSDDDSTAVDSTEESEDAATEDEEDL. Position 838 is a phosphothreonine (T838). Residues 926–1091 form the Helicase ATP-binding domain; sequence VTMNERKLNG…WSLMHFLMPY (166 aa). 939-946 provides a ligand contact to ATP; it reads DEMGLGKT. Residues 1471–1492 form a disordered region; sequence VQKQSIANGKTEPEEETEAEDP. A Helicase C-terminal domain is found at 1662-1812; that stretch reads TMDRLLRQLK…DMAIEGGNFT (151 aa). A disordered region spans residues 1828 to 1856; that stretch reads EQSEQDESSQEKSENKDRIVATTTLSDTP. The segment covering 1836-1846 has biased composition (basic and acidic residues); the sequence is SQEKSENKDRI. Residues 1951–1996 are a coiled coil; it reads AAWTAEQLRAAEAELEAQKREWEANRLAAMHKEEELLKQETEAEEM. A disordered region spans residues 2061-2100; sequence KEHKRSRTDAGYDGSRRPNKMRREDNYVPPRSLFDRPTPQ. Positions 2067 to 2086 are enriched in basic and acidic residues; that stretch reads RTDAGYDGSRRPNKMRREDN. The region spanning 2136-2205 is the Myb-like domain; it reads TEPEAMAEWC…QCRWRYETHI (70 aa). Positions 2318-2362 are disordered; that stretch reads IREKQRGQQMSQPPVGVGVVQQMQQQSQQQQQPAPPPLPQQQQPQ. Residues 2325–2349 are compositionally biased toward low complexity; the sequence is QQMSQPPVGVGVVQQMQQQSQQQQQ.

Belongs to the SNF2/RAD54 helicase family. SWR1 subfamily. In terms of assembly, component of the Tip60 chromatin-remodeling complex which contains Domino, Tip60, Tra1, Brd8, E(Pc), DMAP1, Pontin, Reptin, Ing3, Act87E, BAP55, Mrg15, MrgBP, Gas41 and YL-1. As to expression, isoform B is present at high levels in ovary, in follicle cells, nurse cells and oocyte. Isoform B is also present in germline and somatic stem cells from the germarium. Isoform A is undetectable in adult ovary (at protein level).

The protein resides in the nucleus. Its function is as follows. Mediates the ATP-dependent exchange of unmodified histone H2AV for its phosphorylated and acetylated form H2AVK5acS138ph, leading to transcriptional regulation of selected genes by chromatin remodeling. Involved in Notch signaling. Represses E2F target genes. Required for somatic stem cell self-renewal but not for germline stem cell self-renewal. Involved in oogenesis. The polypeptide is Helicase domino (dom) (Drosophila melanogaster (Fruit fly)).